The primary structure comprises 572 residues: Oxygen-dependent choline dehydrogenase (572 aa).

9 to 38 (DYVIIGGGSAGSVLGARLSEDKDKNVLVLE) provides a ligand contact to FAD. Residue His-477 is the Proton acceptor of the active site.

It belongs to the GMC oxidoreductase family. The cofactor is FAD.

It catalyses the reaction choline + A = betaine aldehyde + AH2. The enzyme catalyses betaine aldehyde + NAD(+) + H2O = glycine betaine + NADH + 2 H(+). The protein operates within amine and polyamine biosynthesis; betaine biosynthesis via choline pathway; betaine aldehyde from choline (cytochrome c reductase route): step 1/1. Involved in the biosynthesis of the osmoprotectant glycine betaine. Catalyzes the oxidation of choline to betaine aldehyde and betaine aldehyde to glycine betaine at the same rate. The protein is Oxygen-dependent choline dehydrogenase of Staphylococcus epidermidis (strain ATCC 35984 / DSM 28319 / BCRC 17069 / CCUG 31568 / BM 3577 / RP62A).